Reading from the N-terminus, the 366-residue chain is Holliday junction branch migration complex subunit RuvB (366 aa).

Residues 1 to 50 (MAIISSKKQPPEPNGEPKQRRESAKAPSTENILKPEAAIDEQEQQEEGIR) are disordered. Residues 13 to 210 (PNGEPKQRRE…FGLIQKLRFY (198 aa)) form a large ATPase domain (RuvB-L) region. The segment covering 15–24 (GEPKQRRESA) has biased composition (basic and acidic residues). Residues isoleucine 49, arginine 50, glycine 91, lysine 94, threonine 95, threonine 96, 157–159 (EDY), arginine 200, tyrosine 210, and arginine 247 each bind ATP. Threonine 95 provides a ligand contact to Mg(2+). Residues 211–281 (EVDELTQIVL…IASEALQLFQ (71 aa)) are small ATPAse domain (RuvB-S). Residues 284-366 (PCGLDWTDRQ…TPPNEQLSLL (83 aa)) are head domain (RuvB-H). Positions 339 and 344 each coordinate DNA.

It belongs to the RuvB family. As to quaternary structure, homohexamer. Forms an RuvA(8)-RuvB(12)-Holliday junction (HJ) complex. HJ DNA is sandwiched between 2 RuvA tetramers; dsDNA enters through RuvA and exits via RuvB. An RuvB hexamer assembles on each DNA strand where it exits the tetramer. Each RuvB hexamer is contacted by two RuvA subunits (via domain III) on 2 adjacent RuvB subunits; this complex drives branch migration. In the full resolvosome a probable DNA-RuvA(4)-RuvB(12)-RuvC(2) complex forms which resolves the HJ.

It localises to the cytoplasm. The catalysed reaction is ATP + H2O = ADP + phosphate + H(+). Functionally, the RuvA-RuvB-RuvC complex processes Holliday junction (HJ) DNA during genetic recombination and DNA repair, while the RuvA-RuvB complex plays an important role in the rescue of blocked DNA replication forks via replication fork reversal (RFR). RuvA specifically binds to HJ cruciform DNA, conferring on it an open structure. The RuvB hexamer acts as an ATP-dependent pump, pulling dsDNA into and through the RuvAB complex. RuvB forms 2 homohexamers on either side of HJ DNA bound by 1 or 2 RuvA tetramers; 4 subunits per hexamer contact DNA at a time. Coordinated motions by a converter formed by DNA-disengaged RuvB subunits stimulates ATP hydrolysis and nucleotide exchange. Immobilization of the converter enables RuvB to convert the ATP-contained energy into a lever motion, pulling 2 nucleotides of DNA out of the RuvA tetramer per ATP hydrolyzed, thus driving DNA branch migration. The RuvB motors rotate together with the DNA substrate, which together with the progressing nucleotide cycle form the mechanistic basis for DNA recombination by continuous HJ branch migration. Branch migration allows RuvC to scan DNA until it finds its consensus sequence, where it cleaves and resolves cruciform DNA. In Nostoc punctiforme (strain ATCC 29133 / PCC 73102), this protein is Holliday junction branch migration complex subunit RuvB.